We begin with the raw amino-acid sequence, 514 residues long: Protein nucleotidyltransferase YdiU (514 aa).

ATP is bound by residues G90, G92, R93, K113, D125, G126, R176, and R183. Residue D267 is the Proton acceptor of the active site. Mg(2+) is bound by residues N268 and D277. D277 serves as a coordination point for ATP.

The protein belongs to the SELO family. Mg(2+) is required as a cofactor. Requires Mn(2+) as cofactor.

The catalysed reaction is L-seryl-[protein] + ATP = 3-O-(5'-adenylyl)-L-seryl-[protein] + diphosphate. The enzyme catalyses L-threonyl-[protein] + ATP = 3-O-(5'-adenylyl)-L-threonyl-[protein] + diphosphate. It carries out the reaction L-tyrosyl-[protein] + ATP = O-(5'-adenylyl)-L-tyrosyl-[protein] + diphosphate. It catalyses the reaction L-histidyl-[protein] + UTP = N(tele)-(5'-uridylyl)-L-histidyl-[protein] + diphosphate. The catalysed reaction is L-seryl-[protein] + UTP = O-(5'-uridylyl)-L-seryl-[protein] + diphosphate. The enzyme catalyses L-tyrosyl-[protein] + UTP = O-(5'-uridylyl)-L-tyrosyl-[protein] + diphosphate. In terms of biological role, nucleotidyltransferase involved in the post-translational modification of proteins. It can catalyze the addition of adenosine monophosphate (AMP) or uridine monophosphate (UMP) to a protein, resulting in modifications known as AMPylation and UMPylation. The chain is Protein nucleotidyltransferase YdiU from Photobacterium profundum (strain SS9).